Here is a 458-residue protein sequence, read N- to C-terminus: Argininosuccinate lyase (458 aa).

This sequence belongs to the lyase 1 family. Argininosuccinate lyase subfamily.

The protein resides in the cytoplasm. The enzyme catalyses 2-(N(omega)-L-arginino)succinate = fumarate + L-arginine. Its pathway is amino-acid biosynthesis; L-arginine biosynthesis; L-arginine from L-ornithine and carbamoyl phosphate: step 3/3. The sequence is that of Argininosuccinate lyase from Actinobacillus pleuropneumoniae serotype 5b (strain L20).